We begin with the raw amino-acid sequence, 242 residues long: Transcription factor Spi-C (242 aa).

Residues 112–195 (LRLFEYLFES…IRRKLTYQFS (84 aa)) constitute a DNA-binding region (ETS).

This sequence belongs to the ETS family. As to quaternary structure, binds DNA as a monomer. As to expression, expressed in lymphoid tissues, including spleen, bone marrow and thymus. According to PubMed:19037245, highly expressed in red pulp macrophages and, at lower, levels in B-cells, but not in other cells, including, monocytes, dendritic cells and other tissue macrophages. According to PubMed:10464163 expressed in pre- and mature B-cells but not in immature B-cells; according to PubMed:10187812 not expressed in pre- but predominantly in mature B-cells and at lower levels in macrophages.

Its subcellular location is the nucleus. Its function is as follows. Controls the development of red pulp macrophages required for red blood cells recycling and iron homeostasis. Transcription factor that binds to the PU-box, a purine-rich DNA sequence (5'-GAGGA[AT]-3') that can act as a lymphoid-specific enhancer. Regulates VCAM1 gene expression. The protein is Transcription factor Spi-C (Spic) of Mus musculus (Mouse).